A 420-amino-acid polypeptide reads, in one-letter code: Gamma-glutamyl phosphate reductase (420 aa).

Belongs to the gamma-glutamyl phosphate reductase family.

It localises to the cytoplasm. The catalysed reaction is L-glutamate 5-semialdehyde + phosphate + NADP(+) = L-glutamyl 5-phosphate + NADPH + H(+). It functions in the pathway amino-acid biosynthesis; L-proline biosynthesis; L-glutamate 5-semialdehyde from L-glutamate: step 2/2. Its function is as follows. Catalyzes the NADPH-dependent reduction of L-glutamate 5-phosphate into L-glutamate 5-semialdehyde and phosphate. The product spontaneously undergoes cyclization to form 1-pyrroline-5-carboxylate. This is Gamma-glutamyl phosphate reductase from Streptococcus sanguinis (strain SK36).